The primary structure comprises 469 residues: 3-phosphoshikimate 1-carboxyvinyltransferase (469 aa).

Residues lysine 21–lysine 45 form a disordered region. The 3-phosphoshikimate site is built by lysine 52, serine 53, and arginine 57. Lysine 52 serves as a coordination point for phosphoenolpyruvate. 2 residues coordinate phosphoenolpyruvate: glycine 125 and arginine 153. 3-phosphoshikimate contacts are provided by serine 199, glutamine 201, aspartate 352, and lysine 379. Glutamine 201 contributes to the phosphoenolpyruvate binding site. Aspartate 352 (proton acceptor) is an active-site residue. Positions 383 and 426 each coordinate phosphoenolpyruvate.

This sequence belongs to the EPSP synthase family. In terms of assembly, monomer.

The protein localises to the cytoplasm. The enzyme catalyses 3-phosphoshikimate + phosphoenolpyruvate = 5-O-(1-carboxyvinyl)-3-phosphoshikimate + phosphate. Its pathway is metabolic intermediate biosynthesis; chorismate biosynthesis; chorismate from D-erythrose 4-phosphate and phosphoenolpyruvate: step 6/7. Its function is as follows. Catalyzes the transfer of the enolpyruvyl moiety of phosphoenolpyruvate (PEP) to the 5-hydroxyl of shikimate-3-phosphate (S3P) to produce enolpyruvyl shikimate-3-phosphate and inorganic phosphate. This is 3-phosphoshikimate 1-carboxyvinyltransferase from Bradyrhizobium diazoefficiens (strain JCM 10833 / BCRC 13528 / IAM 13628 / NBRC 14792 / USDA 110).